The following is a 36-amino-acid chain: Photosystem I reaction center subunit VIII (36 aa).

Residues 8 to 28 (SIFVPLVGLVFPAIAIASLFL) traverse the membrane as a helical segment.

The protein belongs to the PsaI family.

The protein resides in the plastid. The protein localises to the chloroplast thylakoid membrane. Its function is as follows. May help in the organization of the PsaL subunit. In Jasminum nudiflorum (Winter jasmine), this protein is Photosystem I reaction center subunit VIII.